Consider the following 100-residue polypeptide: Enhancer of yellow 2 transcription factor (100 aa).

It belongs to the ENY2 family. Component of the nuclear pore complex (NPC)-associated AMEX complex (anchoring and mRNA export complex), composed of at least e(y)2 and xmas-2. Component of the SAGA transcription coactivator-HAT complexes, at least composed of Ada2b, e(y)2, Pcaf/Gcn5, Taf10 and Nipped-A/Trrap. Within the SAGA complex, e(y)2, Sgf11, and not/nonstop form an additional subcomplex of SAGA called the DUB module (deubiquitination module). Component of the THO complex, composed of at least e(y)2, HPR1, THO2, THOC5, THOC6 and THOC7. Interacts with e(y)1. Interacts with su(Hw) (via zinc fingers). Interacts with xmas-2; required for localization to the nuclear periphery. Interacts with the nuclear pore complex (NPC).

The protein resides in the nucleus. The protein localises to the nucleoplasm. Its subcellular location is the cytoplasm. Functionally, involved in mRNA export coupled transcription activation by association with both the AMEX and the SAGA complexes. The SAGA complex is a multiprotein complex that activates transcription by remodeling chromatin and mediating histone acetylation and deubiquitination. Within the SAGA complex, participates in a subcomplex that specifically deubiquitinates histone H2B. The SAGA complex is recruited to specific gene promoters by activators, where it is required for transcription. Required for nuclear receptor-mediated transactivation. Involved in transcription elongation by recruiting the THO complex onto nascent mRNA. The AMEX complex functions in docking export-competent ribonucleoprotein particles (mRNPs) to the nuclear entrance of the nuclear pore complex (nuclear basket). AMEX participates in mRNA export and accurate chromatin positioning in the nucleus by tethering genes to the nuclear periphery. This chain is Enhancer of yellow 2 transcription factor, found in Drosophila ananassae (Fruit fly).